Reading from the N-terminus, the 214-residue chain is Large ribosomal subunit protein uL16-like (214 aa).

The protein belongs to the universal ribosomal protein uL16 family. Component of the 60S large ribosomal subunit (LSU).

The protein localises to the cytoplasm. Its function is as follows. Testis-specific component of the ribosome, which is required for the transition from prophase to metaphase in male meiosis I. Compensates for the inactivated X-linked RPL10 paralog during spermatogenesis. The ribosome is a large ribonucleoprotein complex responsible for the synthesis of proteins in the cell. The small ribosomal subunit (SSU) binds messenger RNAs (mRNAs) and translates the encoded message by selecting cognate aminoacyl-transfer RNA (tRNA) molecules. The large subunit (LSU) contains the ribosomal catalytic site termed the peptidyl transferase center (PTC), which catalyzes the formation of peptide bonds, thereby polymerizing the amino acids delivered by tRNAs into a polypeptide chain. The nascent polypeptides leave the ribosome through a tunnel in the LSU and interact with protein factors that function in enzymatic processing, targeting, and the membrane insertion of nascent chains at the exit of the ribosomal tunnel. This chain is Large ribosomal subunit protein uL16-like (RPL10L), found in Macaca fascicularis (Crab-eating macaque).